Consider the following 446-residue polypeptide: Exodeoxyribonuclease 7 large subunit (446 aa).

This sequence belongs to the XseA family. In terms of assembly, heterooligomer composed of large and small subunits.

It localises to the cytoplasm. It carries out the reaction Exonucleolytic cleavage in either 5'- to 3'- or 3'- to 5'-direction to yield nucleoside 5'-phosphates.. Bidirectionally degrades single-stranded DNA into large acid-insoluble oligonucleotides, which are then degraded further into small acid-soluble oligonucleotides. In Geotalea uraniireducens (strain Rf4) (Geobacter uraniireducens), this protein is Exodeoxyribonuclease 7 large subunit.